The chain runs to 441 residues: 3-oxo-glucose-6-phosphate:glutamate aminotransferase (441 aa).

98-99 (TS) contributes to the substrate binding site. A pyridoxal 5'-phosphate-binding site is contributed by 125-126 (GT). Position 151 (Phe151) interacts with substrate. Pyridoxal 5'-phosphate-binding residues include Gln225 and Ser242. 244-246 (NPY) is a binding site for substrate. Lys247 is subject to N6-(pyridoxal phosphate)lysine. 2 residues coordinate substrate: Tyr274 and Lys282. A pyridoxal 5'-phosphate-binding site is contributed by Asn292. Position 379 (Tyr379) interacts with substrate.

Belongs to the DegT/DnrJ/EryC1 family. As to quaternary structure, homodimer. The cofactor is pyridoxal 5'-phosphate.

The catalysed reaction is 3-dehydro-D-glucose 6-phosphate + L-glutamate = D-kanosamine 6-phosphate + 2-oxoglutarate. It participates in antibiotic biosynthesis; kanosamine biosynthesis. Involved in the biosynthesis of kanosamine (3-amino-3-deoxy-D-glucose), which is known to have antibiotic and antifungal properties, and to be a precursor of the antibiotic neotrehalosadiamine (3,3'-diamino-3,3'-dideoxy-alpha,beta-trehalose (NTD)). Catalyzes the reversible pyridoxal phosphate-dependent transamination of 3-dehydro-alpha-D-glucose 6-phosphate to form alpha-D-kanosamine-6-phosphate. It can only use alpha-anomer and glutamate is the only amino donor. The chain is 3-oxo-glucose-6-phosphate:glutamate aminotransferase (ntdA) from Bacillus subtilis (strain 168).